Consider the following 1161-residue polypeptide: Mitogen-activated protein kinase kinase kinase (1161 aa).

Positions Gly56–Pro120 constitute an SH3 domain. The 261-residue stretch at Leu142–Ile402 folds into the Protein kinase domain. ATP contacts are provided by residues Ile148–Val156 and Lys169. Asp264 functions as the Proton acceptor in the catalytic mechanism. A Phosphothreonine; by autocatalysis modification is found at Thr300. Ser304 carries the post-translational modification Phosphoserine; by autocatalysis. 2 leucine-zipper regions span residues Ile426 to Leu447 and Leu461 to Met482. A phosphoserine mark is found at Ser525 and Ser560. Disordered stretches follow at residues Ser560–Gly615 and Thr658–Asn678. Polar residues predominate over residues Ala571–Ala583. Residues Gln591–Leu601 are compositionally biased toward low complexity. Phosphoserine is present on residues Ser685, Ser773, and Ser792. A disordered region spans residues Gly790–Asn830. Residues Asn812 to Asn830 are compositionally biased toward polar residues. At Thr862 the chain carries Phosphothreonine. Disordered stretches follow at residues Arg988–Asn1014, Glu1045–Ser1093, and Gly1137–Cys1161. The span at Ser989 to Thr1010 shows a compositional bias: low complexity. Ser993 bears the Phosphoserine mark. Basic residues predominate over residues Asn1052–Lys1063. The segment covering Gly1073–His1086 has biased composition (basic and acidic residues). Positions Pro1150–Cys1161 are enriched in polar residues.

It belongs to the protein kinase superfamily. STE Ser/Thr protein kinase family. MAP kinase kinase kinase subfamily. As to quaternary structure, homodimer. Mg(2+) is required as a cofactor. Autophosphorylation on serine and threonine residues within the activation loop plays a role in enzyme activation. In terms of tissue distribution, expressed both maternally and zygotically. Expressed uniformly in large quantities in the early embryo (stages 1-4). In the late embryo, expression is ubiquitous, but expression levels are dramatically reduced. Expressed in the adult head and thorax, and in S2 cells.

It catalyses the reaction L-seryl-[protein] + ATP = O-phospho-L-seryl-[protein] + ADP + H(+). The catalysed reaction is L-threonyl-[protein] + ATP = O-phospho-L-threonyl-[protein] + ADP + H(+). With respect to regulation, homodimerization via the leucine zipper domains is required for autophosphorylation and subsequent activation. Activated by C6-ceramide. In terms of biological role, activates the JUN N-terminal pathway during dorsal closure. In Drosophila melanogaster (Fruit fly), this protein is Mitogen-activated protein kinase kinase kinase.